The following is a 476-amino-acid chain: Bifunctional protein HldE (476 aa).

The segment at 1–319 (MKISLPAFEK…AALNLSHGES (319 aa)) is ribokinase. 195–198 (NMSE) is an ATP binding site. Residue Asp264 is part of the active site. The cytidylyltransferase stretch occupies residues 345 to 476 (MTNGCFDILH…AIIENIMAKQ (132 aa)).

The protein in the N-terminal section; belongs to the carbohydrate kinase PfkB family. It in the C-terminal section; belongs to the cytidylyltransferase family. As to quaternary structure, homodimer.

It carries out the reaction D-glycero-beta-D-manno-heptose 7-phosphate + ATP = D-glycero-beta-D-manno-heptose 1,7-bisphosphate + ADP + H(+). The catalysed reaction is D-glycero-beta-D-manno-heptose 1-phosphate + ATP + H(+) = ADP-D-glycero-beta-D-manno-heptose + diphosphate. It participates in nucleotide-sugar biosynthesis; ADP-L-glycero-beta-D-manno-heptose biosynthesis; ADP-L-glycero-beta-D-manno-heptose from D-glycero-beta-D-manno-heptose 7-phosphate: step 1/4. The protein operates within nucleotide-sugar biosynthesis; ADP-L-glycero-beta-D-manno-heptose biosynthesis; ADP-L-glycero-beta-D-manno-heptose from D-glycero-beta-D-manno-heptose 7-phosphate: step 3/4. Its function is as follows. Catalyzes the phosphorylation of D-glycero-D-manno-heptose 7-phosphate at the C-1 position to selectively form D-glycero-beta-D-manno-heptose-1,7-bisphosphate. In terms of biological role, catalyzes the ADP transfer from ATP to D-glycero-beta-D-manno-heptose 1-phosphate, yielding ADP-D-glycero-beta-D-manno-heptose. The sequence is that of Bifunctional protein HldE from Shewanella loihica (strain ATCC BAA-1088 / PV-4).